The chain runs to 1422 residues: Cardiac-enriched FHL2-interacting protein (1422 aa).

The segment at 1–23 (MQGNKKCADGFSDTSSIGSVLDE) is disordered. At Thr119 the chain carries Phosphothreonine. Disordered regions lie at residues 151–177 (RTEAQPCDSRPPPSKPPALKNTPKFAH), 199–265 (AGVS…GRGK), 279–443 (SAFE…SSPF), 459–500 (LETS…KAPS), 516–718 (YSPL…SDSQ), 731–850 (FSTS…TNKH), 877–1127 (VSSE…HLER), 1142–1244 (TGAA…GWEP), and 1353–1422 (RQGS…EGVS). The span at 201–210 (VSSTHQSSHQ) shows a compositional bias: polar residues. 2 stretches are compositionally biased toward basic and acidic residues: residues 284–298 (WDAHQPKLRERKDIT) and 305–315 (KAPKHYEDMPL). Residue Ser327 is modified to Phosphoserine. Residues 342-351 (SPSGIQSTSG) are compositionally biased toward polar residues. Residues 395–405 (GPHDASEDKKQ) show a composition bias toward basic and acidic residues. Over residues 461–470 (TSDTQPVETS) the composition is skewed to polar residues. The residue at position 472 (Ser472) is a Phosphoserine. Composition is skewed to basic and acidic residues over residues 481–495 (QEKESSEAQSRDSYK), 524–537 (GFDEKTRGKLDGKQ), and 579–588 (PAMDSRESFA). A compositionally biased stretch (low complexity) spans 590–606 (SHPTFSSPSASSKTHFS). 3 stretches are compositionally biased toward basic and acidic residues: residues 611 to 622 (AAERNSHEKEEA), 635 to 644 (WHPDSRENLP), and 653 to 675 (CNRDSETGQATEKMKPRQLEKRL). The span at 731–744 (FSTSSSDQSFASFE) shows a compositional bias: low complexity. Over residues 790–801 (GVEEHRQKETQR) the composition is skewed to basic and acidic residues. Ser815 bears the Phosphoserine mark. The segment covering 828–839 (ADKDTALSHAKD) has biased composition (basic and acidic residues). 2 stretches are compositionally biased toward polar residues: residues 907–926 (SESQEMRNTPLSNSTPSTEQ) and 944–954 (QDETSQQTRKG). Positions 975-991 (ADERLAHEKSRSADSGK) are enriched in basic and acidic residues. Polar residues predominate over residues 1048 to 1067 (AATSPNPSSLGGSSTCSPAA). Residues 1087–1099 (PPGPGPWASPGPS) are compositionally biased toward pro residues. The span at 1173–1184 (RRAKKLASKRRK) shows a compositional bias: basic residues. The span at 1185–1202 (SDQMSEKHTEAWEGKSFT) shows a compositional bias: basic and acidic residues. Positions 1353 to 1366 (RQGSSHRPQSSQGA) are enriched in polar residues. Over residues 1411–1422 (DDLEDFATEGVS) the composition is skewed to acidic residues.

In terms of assembly, interacts with FHL2.

It is found in the cytoplasm. Its subcellular location is the myofibril. The protein resides in the sarcomere. It localises to the z line. In terms of biological role, plays an important role in cardiomyocyte hypertrophy via activation of the calcineurin/NFAT signaling pathway. This chain is Cardiac-enriched FHL2-interacting protein, found in Rattus norvegicus (Rat).